A 130-amino-acid chain; its full sequence is Large ribosomal subunit protein eL34 (130 aa).

Positions 111 to 130 (KPVSKPPKIQKTAKAASKSK) are disordered.

Belongs to the eukaryotic ribosomal protein eL34 family.

The chain is Large ribosomal subunit protein eL34 (RpL34) from Aedes albopictus (Asian tiger mosquito).